Reading from the N-terminus, the 448-residue chain is tRNA wybutosine-synthesizing protein 2 homolog (448 aa).

S-adenosyl-L-methionine-binding positions include serine 218, lysine 225, glutamate 265, and 293–294 (DN).

Belongs to the class I-like SAM-binding methyltransferase superfamily. TRM5/TYW2 family.

It carries out the reaction 4-demethylwyosine(37) in tRNA(Phe) + S-adenosyl-L-methionine = 4-demethyl-7-[(3S)-3-amino-3-carboxypropyl]wyosine(37) in tRNA(Phe) + S-methyl-5'-thioadenosine + H(+). It participates in tRNA modification; wybutosine-tRNA(Phe) biosynthesis. Its function is as follows. S-adenosyl-L-methionine-dependent transferase that acts as a component of the wybutosine biosynthesis pathway. Wybutosine is a hyper modified guanosine with a tricyclic base found at the 3'-position adjacent to the anticodon of eukaryotic phenylalanine tRNA. Catalyzes the transfer of the alpha-amino-alpha-carboxypropyl (acp) group from S-adenosyl-L-methionine to the C-7 position of 4-demethylwyosine (imG-14) to produce wybutosine-86. This chain is tRNA wybutosine-synthesizing protein 2 homolog (TRMT12), found in Homo sapiens (Human).